We begin with the raw amino-acid sequence, 61 residues long: Large ribosomal subunit protein uL30 (61 aa).

The tract at residues 1–20 (MSQKKVTVRQVGSPIGRKPE) is disordered.

This sequence belongs to the universal ribosomal protein uL30 family. Part of the 50S ribosomal subunit.

The polypeptide is Large ribosomal subunit protein uL30 (Hyphomonas neptunium (strain ATCC 15444)).